Consider the following 398-residue polypeptide: uncharacterized protein (398 aa).

One can recognise a CobW C-terminal domain in the interval 235 to 351 (VAIVEFSARR…DIVNALNAAL (117 aa)).

This is an uncharacterized protein from Mycobacterium bovis (strain ATCC BAA-935 / AF2122/97).